The primary structure comprises 409 residues: Probable tRNA pseudouridine synthase D (409 aa).

Residue D73 is the Nucleophile of the active site. The 220-residue stretch at 146-365 folds into the TRUD domain; the sequence is GFPNFFGDQR…SSGDRRIISA (220 aa).

This sequence belongs to the pseudouridine synthase TruD family.

The enzyme catalyses uridine(13) in tRNA = pseudouridine(13) in tRNA. Its function is as follows. Could be responsible for synthesis of pseudouridine from uracil-13 in transfer RNAs. In Thermoplasma volcanium (strain ATCC 51530 / DSM 4299 / JCM 9571 / NBRC 15438 / GSS1), this protein is Probable tRNA pseudouridine synthase D.